A 263-amino-acid chain; its full sequence is 3-deoxy-manno-octulosonate cytidylyltransferase (263 aa).

This sequence belongs to the KdsB family.

Its subcellular location is the cytoplasm. The catalysed reaction is 3-deoxy-alpha-D-manno-oct-2-ulosonate + CTP = CMP-3-deoxy-beta-D-manno-octulosonate + diphosphate. It participates in nucleotide-sugar biosynthesis; CMP-3-deoxy-D-manno-octulosonate biosynthesis; CMP-3-deoxy-D-manno-octulosonate from 3-deoxy-D-manno-octulosonate and CTP: step 1/1. It functions in the pathway bacterial outer membrane biogenesis; lipopolysaccharide biosynthesis. Its function is as follows. Activates KDO (a required 8-carbon sugar) for incorporation into bacterial lipopolysaccharide in Gram-negative bacteria. This chain is 3-deoxy-manno-octulosonate cytidylyltransferase, found in Burkholderia cenocepacia (strain HI2424).